Consider the following 76-residue polypeptide: Gas vesicle protein A1 (76 aa).

Binds to GvpF1 stretches follow at residues 1 to 22 (MAQPDSSGLAEVLDRVLDKGVV) and 2 to 43 (AQPD…EARV). The tract at residues 9–19 (LAEVLDRVLDK) is alpha helix 1. The segment at 23–31 (VDVWARVSL) is beta-strand 1. Residues 32-34 (VGI) form a beta turn region. The tract at residues 35–43 (EILTVEARV) is beta-strand 2. An alpha helix 2 region spans residues 48-67 (VDTFLHYAEEIAKIEQAELT).

This sequence belongs to the gas vesicle GvpA family. As to quaternary structure, major component of the gas vesicle shell which is 2 nm thick and consists of a single layer of the protein. It forms 4.6 nm-wide ribs nearly perpendicular to the long axis of the vesicle. Modeled as antiparallel homodimers. The ribs form a low-pitch helix rather than a stack of hoops. Interacts with GvpF1 via its N-terminus (residues 1-43) in early growth stages, none of the other GvpG1 to GvpM1 proteins were seen to directly bind GvpA1 in H.volcanii experiments. Might interact with GvpJ1. Might interact with GvpG1, GvpH1, GvpJ1, GvpM1, GvpN1 and GvpO1.

Its subcellular location is the gas vesicle shell. Gas vesicles are hollow, gas filled proteinaceous nanostructures found in several microbial planktonic microorganisms. They allow positioning of halobacteria at the optimal depth for growth in the poorly aerated shallow brine pools of their habitat. GvpA forms the protein shell. The critical collapse pressure (CCP) of p-vac gas vesicles is 0.66 MPa; mutating residues in p-gvpA to those found in c-gvpA increases the CCP. These residues partially and independently control the width and strength of gas vesicles. In stationary phase gas vesicles, about 30 times more GvpA1 is found than GvpA2. Its function is as follows. Expression of a 9.5 kb p-vac DNA fragment containing 2 divergently transcribed regions (gvpD-gvpE-gvpF-gvpG-gvpH-gvpI-gvpJ-gvpK-gvpL-gvpM and gvpA-gvpC-gvpN-gvpO) allows H.volcanii to produce gas vesicles. All site-directed mutagenesis is tested in H.volcanii. A minimal gas vesicle can be made in H.volcanii by gvpA1-gvpO1 plus gvpF1-gvpG1-gvpJ1-gvpK1-gvpL1-gvpM1; lack of enough GvpJ1 prevents their formation. A similar region restores gas vesicle production in H.halobium without the p-vac locus, but it still has the c-vac locus. The protein is Gas vesicle protein A1 of Halobacterium salinarum (strain ATCC 700922 / JCM 11081 / NRC-1) (Halobacterium halobium).